We begin with the raw amino-acid sequence, 229 residues long: Putative N-acetylmannosamine-6-phosphate 2-epimerase (229 aa).

This sequence belongs to the NanE family.

The enzyme catalyses an N-acyl-D-glucosamine 6-phosphate = an N-acyl-D-mannosamine 6-phosphate. It functions in the pathway amino-sugar metabolism; N-acetylneuraminate degradation; D-fructose 6-phosphate from N-acetylneuraminate: step 3/5. In terms of biological role, converts N-acetylmannosamine-6-phosphate (ManNAc-6-P) to N-acetylglucosamine-6-phosphate (GlcNAc-6-P). This is Putative N-acetylmannosamine-6-phosphate 2-epimerase from Salmonella agona (strain SL483).